The sequence spans 546 residues: Type II methyltransferase M.XhoI (546 aa).

This sequence belongs to the N(4)/N(6)-methyltransferase family.

It catalyses the reaction a 2'-deoxyadenosine in DNA + S-adenosyl-L-methionine = an N(6)-methyl-2'-deoxyadenosine in DNA + S-adenosyl-L-homocysteine + H(+). Functionally, a gamma subtype methylase, recognizes the double-stranded sequence 5'-CTCGAG-3', methylates A-5 on both strands, and protects the DNA from cleavage by the XhoI endonuclease. This is Type II methyltransferase M.XhoI from Xanthomonas vasicola.